The sequence spans 418 residues: Cyclin-A1 (418 aa).

This sequence belongs to the cyclin family. Cyclin AB subfamily. In terms of assembly, interacts with the CDK1 and the CDK2 protein kinases to form a serine/threonine kinase holoenzyme complex. The cyclin subunit imparts substrate specificity to the complex.

The protein localises to the nucleus. May be involved in the control of the cell cycle at the G1/S (start) and G2/M (mitosis) transitions. The polypeptide is Cyclin-A1 (ccna1) (Xenopus laevis (African clawed frog)).